The following is a 500-amino-acid chain: NAD(P)H-quinone oxidoreductase chain 4, chloroplastic (500 aa).

14 helical membrane-spanning segments follow: residues 4-24, 37-57, 87-107, 113-130, 134-154, 167-187, 208-228, 242-262, 272-292, 305-325, 330-350, 386-406, 416-436, and 462-482; these read FPWL…IFFL, IFIC…HFQL, IGPI…AWPV, LFHF…GSFS, LLLF…LLSM, FILY…GIGL, ALEI…SPII, HYST…YGLV, AHSI…IYAA, IAYS…SITD, GAIL…FLAG, LALP…GIIT, ILIT…SLSM, and LFVL…PDFV.

The protein belongs to the complex I subunit 4 family.

It is found in the plastid. The protein resides in the chloroplast thylakoid membrane. The catalysed reaction is a plastoquinone + NADH + (n+1) H(+)(in) = a plastoquinol + NAD(+) + n H(+)(out). It carries out the reaction a plastoquinone + NADPH + (n+1) H(+)(in) = a plastoquinol + NADP(+) + n H(+)(out). The chain is NAD(P)H-quinone oxidoreductase chain 4, chloroplastic from Vitis vinifera (Grape).